We begin with the raw amino-acid sequence, 170 residues long: Protein SprT (170 aa).

The region spanning 23–165 (QLANQHLGTD…RECGEKLQFV (143 aa)) is the SprT-like domain. Histidine 78 is a binding site for Zn(2+). Glutamate 79 is a catalytic residue. A Zn(2+)-binding site is contributed by histidine 82.

The protein belongs to the SprT family. It depends on Zn(2+) as a cofactor.

It is found in the cytoplasm. The protein is Protein SprT of Yersinia enterocolitica serotype O:8 / biotype 1B (strain NCTC 13174 / 8081).